The following is a 101-amino-acid chain: Small ribosomal subunit protein uS14 (101 aa).

It belongs to the universal ribosomal protein uS14 family. Part of the 30S ribosomal subunit. Contacts proteins S3 and S10.

In terms of biological role, binds 16S rRNA, required for the assembly of 30S particles and may also be responsible for determining the conformation of the 16S rRNA at the A site. The sequence is that of Small ribosomal subunit protein uS14 from Psychrobacter arcticus (strain DSM 17307 / VKM B-2377 / 273-4).